The primary structure comprises 546 residues: Probable lysosomal cobalamin transporter (546 aa).

The next 4 helical transmembrane spans lie at 8 to 28, 48 to 68, 102 to 122, and 141 to 161; these read LAQGWIPFTVVVVLAILFSWF, IIALFIALMTTALVPVDIFLV, ILYALLAFFVFVIIPFMYFFF, and YSIGFLIVASVLLLVGAFAPL. Residue Asn-167 is glycosylated (N-linked (GlcNAc...) asparagine). 4 consecutive transmembrane segments (helical) span residues 189–209, 304–324, 352–372, and 407–427; these read TALSLLIGFLTLIGMLIMITY, MVFGAFFLLVALLIFVSLFIT, IIMVYAQIVFPLDYCLFLLVV, and ALLFMCVMLMLIVLSLNVMLF. N-linked (GlcNAc...) asparagine glycans are attached at residues Asn-444, Asn-452, and Asn-459. A helical membrane pass occupies residues 495–515; sequence VWFFGACYYWGTWLFLVVFMT.

It belongs to the LIMR family. LMBRD1 subfamily.

The protein localises to the lysosome membrane. In terms of biological role, probable lysosomal cobalamin transporter. Required to export cobalamin from lysosomes allowing its conversion to cofactors. The protein is Probable lysosomal cobalamin transporter of Nematostella vectensis (Starlet sea anemone).